The chain runs to 205 residues: Thymidylate kinase (205 aa).

10–17 (GIDGAGKS) serves as a coordination point for ATP.

The protein belongs to the thymidylate kinase family.

It catalyses the reaction dTMP + ATP = dTDP + ADP. Its function is as follows. Phosphorylation of dTMP to form dTDP in both de novo and salvage pathways of dTTP synthesis. This is Thymidylate kinase from Ralstonia pickettii (strain 12J).